The following is a 355-amino-acid chain: 6-aminohexanoate-oligomer endohydrolase (355 aa).

Thr-267 serves as the catalytic Nucleophile.

Belongs to the peptidase S58 family. In terms of assembly, heterotetramer composed of 4 alpha/beta heterodimers. Exists at the monomer/dimer/trimer equilibrium in aqueous solution. Expressed as an inactive precursor that is cleaved autocatalytically at Asn266/Thr267 to generate an active enzyme composed of an alpha subunit and a beta subunit.

It carries out the reaction [N-(6-aminohexanoyl)]n + H2O = [N-(6-aminohexanoyl)]n-x + [N-(6-aminohexanoyl)]x.. Its pathway is xenobiotic degradation; nylon-6 oligomer degradation. Its function is as follows. Involved in the degradation of nylon-6 oligomers. Degrades cyclic and linear oligomers of 6-aminohexanoate (Ahx) with a degree of polymerization greater than three by an endo-type mode. Cannot use Ahx cyclic dimer or the Ahx linear dimer. This Paenarthrobacter ureafaciens protein is 6-aminohexanoate-oligomer endohydrolase.